The chain runs to 396 residues: Large ribosomal subunit protein uL24m (396 aa).

The segment at 374–396 is disordered; the sequence is QLSLGGGQEDAATTTSPEQPKVV. Positions 384-396 are enriched in polar residues; sequence AATTTSPEQPKVV.

The protein belongs to the universal ribosomal protein uL24 family. As to quaternary structure, component of the mitochondrial large ribosomal subunit (mt-LSU). Mature N.crassa 74S mitochondrial ribosomes consist of a small (37S) and a large (54S) subunit. The 37S small subunit contains a 16S ribosomal RNA (16S mt-rRNA) and 32 different proteins. The 54S large subunit contains a 23S rRNA (23S mt-rRNA) and 42 different proteins. uL24m forms the wall of the exit tunnel.

The protein localises to the mitochondrion. Its function is as follows. Component of the mitochondrial ribosome (mitoribosome), a dedicated translation machinery responsible for the synthesis of mitochondrial genome-encoded proteins, including at least some of the essential transmembrane subunits of the mitochondrial respiratory chain. The mitoribosomes are attached to the mitochondrial inner membrane and translation products are cotranslationally integrated into the membrane. This chain is Large ribosomal subunit protein uL24m (mrpl40), found in Neurospora crassa (strain ATCC 24698 / 74-OR23-1A / CBS 708.71 / DSM 1257 / FGSC 987).